The chain runs to 361 residues: Inhibin alpha chain (361 aa).

An N-terminal signal peptide occupies residues 1 to 21 (MLPLLLPLQLLLLMVMKGGHG). The propeptide occupies 22 to 64 (CQGPELDRELVLAKVRALVLDALGPPNASKDGGKPVAQRLTRR). The tract at residues 45 to 82 (GPPNASKDGGKPVAQRLTRRHAHTGGSTRRSMENEDED) is disordered. Asn-48, Asn-144, and Asn-266 each carry an N-linked (GlcNAc...) asparagine glycan. A propeptide spans 65-230 (HAHTGGSTRR…PPSVGERARR (166 aa)) (inhibin alpha N-terminal region). Disulfide bonds link Cys-260–Cys-323, Cys-289–Cys-358, and Cys-293–Cys-360.

The protein belongs to the TGF-beta family. In terms of assembly, dimeric, linked by one or more disulfide bonds. Activin B is a dimer of alpha and beta-B. Inhibin A is a dimer of alpha and beta-A. Inhibin B is a dimer of alpha and beta-B. Interacts with TGFBR3L; this interaction regulates female fertility. In terms of processing, proteolytic processing yields a number of bioactive forms, consisting either solely of the mature alpha chain, of the most N-terminal propeptide linked through a disulfide bond to the mature alpha chain, or of the entire proprotein.

It localises to the secreted. Inhibins and activins inhibit and activate, respectively, the secretion of follitropin by the pituitary gland. Inhibins/activins are involved in regulating a number of diverse functions such as hypothalamic and pituitary hormone secretion, gonadal hormone secretion, germ cell development and maturation, erythroid differentiation, insulin secretion, nerve cell survival, embryonic axial development or bone growth, depending on their subunit composition. Inhibins appear to oppose the functions of activins. Functionally, inhibin A is a dimer of alpha/INHA and beta-A/INHBA that functions as a feedback regulator in the hypothalamic-pituitary-gonadal (HPG) axis. Inhibits the secretion of FSH from the anterior pituitary gland by acting on pituitary gonadotrope cells. Antagonizes activin A by binding to the proteoglycan, betaglycan, and forming a stable complex with and, thereby, sequestering type II activin receptors while excluding type I receptor. Its function is as follows. Inhibin B is a dimer of alpha and beta-B that plays a crucial role in the regulation of the reproductive system by inhibiting the secretion of follicle-stimulating hormone (FSH) from the anterior pituitary gland. Thereby, maintains reproductive homeostasis in both males and females. Acts as a more potent suppressor of FSH release than inhibin A. Functions as competitive receptor antagonist binding activin type II receptors with high affinity in the presence of the TGF-beta type III coreceptor/TGFBR3L. This Trichosurus vulpecula (Brush-tailed possum) protein is Inhibin alpha chain (INHA).